The primary structure comprises 551 residues: Glucans biosynthesis protein D (551 aa).

Positions 1–32 (MDRRRFIKGSMAMAAVCGTSGIASLFSQAAFA) form a signal peptide, tat-type signal.

The protein belongs to the OpgD/OpgG family. In terms of processing, predicted to be exported by the Tat system. The position of the signal peptide cleavage has not been experimentally proven.

It localises to the periplasm. Its pathway is glycan metabolism; osmoregulated periplasmic glucan (OPG) biosynthesis. In terms of biological role, probably involved in the control of the structural glucose backbone of osmoregulated periplasmic glucans (OPGs). The polypeptide is Glucans biosynthesis protein D (Escherichia coli O127:H6 (strain E2348/69 / EPEC)).